The primary structure comprises 536 residues: Cytoplasmic dynein 2 intermediate chain 2 (536 aa).

Position 15 is a phosphoserine (serine 15). The interval 80–93 is DYNLL2 binding; that stretch reads RNHVDAQVQTEAPV. The DYNLRB1 binding stretch occupies residues 106-131; the sequence is PRLAAFLRRVEAMVIRELNKNWQSHA. 5 WD repeats span residues 215 to 255, 264 to 308, 390 to 430, 433 to 473, and 480 to 520; these read EVPS…DPLL, THTD…QLQL, PHGG…PLTS, LSLK…QKPT, and QDES…TEQG.

It belongs to the dynein light intermediate chain family. In terms of assembly, the cytoplasmic dynein 2 complex consists of two catalytic heavy chains (HCs) and a number of non-catalytic subunits presented by intermediate chains (ICs), light intermediate chains (LICs) and light chains (LCs). Among them, a heavy chain (DYNC2H1), two intermediate chains (DYNC2I2 and DYNC2I1), a light intermediate chain (DYNC2LI1), and a light chain (DYNLT2B) are unique to the cytoplasmic dynein complex 2, but a subset of the light chains are also shared by dynein-1 and dynein-2 complexes. Interacts with DYNC2I1; their C-terminal domains each bind a copy of the heavy chain, and their extended N-terminal regions are held together by an array of light chain dimers. Interacts with DYNLL2; this interaction is essential for dynein-2-mediated retrograde trafficking of ciliary proteins. Interacts with DYNLRB1; this interaction is essential for dynein-2-mediated retrograde trafficking of ciliary proteins. Interacts (via the WD domains) with MAP3K7 and TAB3. Interacts (via WD domains) with TAB2 (via C-terminus). Interacts (via WD domains) with TRAF6 (via TRAF-type domains). As to expression, expressed in several cell lines (at protein level).

It is found in the cytoplasm. The protein resides in the cytoskeleton. It localises to the cilium basal body. The protein localises to the cilium axoneme. Its subcellular location is the microtubule organizing center. It is found in the centrosome. The protein resides in the cell projection. It localises to the cilium. The protein localises to the filopodium. Acts as one of several non-catalytic accessory components of the cytoplasmic dynein 2 complex (dynein-2 complex), a motor protein complex that drives the movement of cargos along microtubules within cilia and flagella in concert with the intraflagellar transport (IFT) system. DYNC2I2 plays a major role in retrograde ciliary protein trafficking and in ciliogenesis. Required also to maintain a functional transition zone. Its function is as follows. Acts as a negative regulator of the Toll-like and IL-1R receptor signaling pathways. Inhibits the MAP3K7-induced NF-kappa-B activation pathway. Inhibits MAP3K7 phosphorylation at 'Thr-184' and 'Thr-187' upon Il-1 beta stimulation. The polypeptide is Cytoplasmic dynein 2 intermediate chain 2 (Homo sapiens (Human)).